Here is a 184-residue protein sequence, read N- to C-terminus: ATP synthase subunit b, chloroplastic (184 aa).

Residues 31-53 traverse the membrane as a helical segment; sequence LINLGIVISLLIYFGKGVLSNLL.

This sequence belongs to the ATPase B chain family. As to quaternary structure, F-type ATPases have 2 components, F(1) - the catalytic core - and F(0) - the membrane proton channel. F(1) has five subunits: alpha(3), beta(3), gamma(1), delta(1), epsilon(1). F(0) has four main subunits: a(1), b(1), b'(1) and c(10-14). The alpha and beta chains form an alternating ring which encloses part of the gamma chain. F(1) is attached to F(0) by a central stalk formed by the gamma and epsilon chains, while a peripheral stalk is formed by the delta, b and b' chains.

It localises to the plastid. The protein resides in the chloroplast thylakoid membrane. Functionally, f(1)F(0) ATP synthase produces ATP from ADP in the presence of a proton or sodium gradient. F-type ATPases consist of two structural domains, F(1) containing the extramembraneous catalytic core and F(0) containing the membrane proton channel, linked together by a central stalk and a peripheral stalk. During catalysis, ATP synthesis in the catalytic domain of F(1) is coupled via a rotary mechanism of the central stalk subunits to proton translocation. Component of the F(0) channel, it forms part of the peripheral stalk, linking F(1) to F(0). The protein is ATP synthase subunit b, chloroplastic of Aneura mirabilis (Parasitic liverwort).